An 865-amino-acid polypeptide reads, in one-letter code: Alanine--tRNA ligase (865 aa).

Zn(2+)-binding residues include His554, His558, Cys656, and His660.

The protein belongs to the class-II aminoacyl-tRNA synthetase family. Zn(2+) is required as a cofactor.

Its subcellular location is the cytoplasm. It carries out the reaction tRNA(Ala) + L-alanine + ATP = L-alanyl-tRNA(Ala) + AMP + diphosphate. In terms of biological role, catalyzes the attachment of alanine to tRNA(Ala) in a two-step reaction: alanine is first activated by ATP to form Ala-AMP and then transferred to the acceptor end of tRNA(Ala). Also edits incorrectly charged Ser-tRNA(Ala) and Gly-tRNA(Ala) via its editing domain. This chain is Alanine--tRNA ligase, found in Francisella tularensis subsp. mediasiatica (strain FSC147).